The sequence spans 737 residues: MPLNRTLSMSSLPGLEDWEDEFDLENAVLFEVAWEVANKVGGIYTVLQTKAKVTGDEWGANYFLVGPYTEQGVRTQVELLEAPTPALKRTLDSMNSKGCKVYFGRWLIEGGPLVVLLDVGASAWALERWKGELWDTCNIGVPWYDREANDAVLFGFLTTWFLGEFLAQSEEKLHVVAHFHEWLAGIGLCLCRARRLPVATIFTTHATLLGRYLCAGAVDFYNNLENFNVDKEAGERQIYHRYCMERAAAHCAHVFTTVSQITAIEAQYLLKRKPDIVTPNGLNVKKFSAMHEFQNLHAQSKARIQEFVRGHFYGHLDFNLDKTLYFFIAGRYEFSNKGADVFLEALARLNYLLRVNGSEQTVVAFFIMPARTNNFNVETLKGQAVRKQLWDTANTVKEKFGRKLYESLLVGSLPDMNKMLDKEDFTMMKRAIFATQRQSFPPVCTHNMLDDSSDPILTTIRRIGLFNSSADRVKVIFHPEFLSSTSPLLPVDYEEFVRGCHLGVFPSYYEPWGYTPAECTVMGIPSISTNLSGFGCFMEEHIADPSAYGIYILDRRFRSLDDSCSQLTSFLYSFCQQSRRQRIIQRNRTERLSDLLDWKYLGRYYMSARHMALSKAFPEHFTYEPNEADAAQGYRYPRPASVPPSPSLSRHSSPHQSEDEEDPRNGPLEEDGERYDEDEEAAKDRRNIRAPEWPRRASCTSSTSGSKRNSVDTATSSSLSTPSEPLSPTSSLGEERN.

At S8 the chain carries Phosphoserine; by AMPK and PKA. Residue S11 is modified to Phosphoserine. K39 serves as a coordination point for UDP. Positions 205 and 211 each coordinate UDP-alpha-D-glucose. Positions 291, 292, 294, 297, and 301 each coordinate alpha-D-glucose 6-phosphate. A UDP-binding site is contributed by R331. R331 provides a ligand contact to UDP-alpha-D-glucose. S412 is modified (phosphoserine). H501 serves as a coordination point for alpha-D-glucose 6-phosphate. Residues E510, W512, and G513 each contribute to the UDP-alpha-D-glucose site. T515 is a UDP binding site. Alpha-D-glucose 6-phosphate is bound by residues R582 and R586. Residues 634–737 (YRYPRPASVP…PTSSLGEERN (104 aa)) are disordered. A Phosphoserine; by DYRK2, GSK3-alpha, GSK3-beta and PASK modification is found at S641. 2 positions are modified to phosphoserine; by GSK3-alpha and GSK3-beta: S645 and S649. S652 carries the phosphoserine modification. At S653 the chain carries Phosphoserine; by GSK3-alpha and GSK3-beta. S657 carries the post-translational modification Phosphoserine; by CK2. Acidic residues predominate over residues 658–681 (EDEEDPRNGPLEEDGERYDEDEEA). Over residues 682-695 (AKDRRNIRAPEWPR) the composition is skewed to basic and acidic residues. The residue at position 698 (S698) is a Phosphoserine. Residues 698 to 714 (SCTSSTSGSKRNSVDTA) show a composition bias toward polar residues. At T700 the chain carries Phosphothreonine. Residue S710 is modified to Phosphoserine. Low complexity predominate over residues 715–737 (TSSSLSTPSEPLSPTSSLGEERN). Position 721 is a phosphothreonine (T721). Phosphoserine occurs at positions 727 and 731.

It belongs to the glycosyltransferase 3 family. In terms of assembly, part of the GYS1-GYG1 complex, a heterooctamer composed of a tetramer of GYS1 and 2 dimers of GYG1, where each GYS1 protomer binds to one GYG1 subunit (via GYG1 C-terminus); the GYS1 tetramer may dissociate from GYG1 dimers to continue glycogen polymerization on its own. In terms of processing, phosphorylation at Ser-8 by AMPK inactivates the enzyme activity. Primed phosphorylation at Ser-657 (site 5) by CSNK2A1 and CSNK2A2 is required for inhibitory phosphorylation at Ser-641 (site 3a), Ser-645 (site 3b), Ser-649 (site 3c) and Ser-653 (site 4) by GSK3A an GSK3B. Phosphorylated at Ser-641 by PASK, leading to inactivation; phosphorylation by PASK is inhibited by glycogen. Phosphorylated at Ser-641 by DYRK2, leading to inactivation. Dephosphorylation at Ser-641 and Ser-645 by PP1 activates the enzyme.

The enzyme catalyses [(1-&gt;4)-alpha-D-glucosyl](n) + UDP-alpha-D-glucose = [(1-&gt;4)-alpha-D-glucosyl](n+1) + UDP + H(+). Its pathway is glycan biosynthesis; glycogen biosynthesis. Allosteric activation by glucose-6-phosphate. Phosphorylation reduces the activity towards UDP-glucose. When in the non-phosphorylated state, glycogen synthase does not require glucose-6-phosphate as an allosteric activator; when phosphorylated it does. In terms of biological role, glycogen synthase participates in the glycogen biosynthetic process along with glycogenin and glycogen branching enzyme. Extends the primer composed of a few glucose units formed by glycogenin by adding new glucose units to it. In this context, glycogen synthase transfers the glycosyl residue from UDP-Glc to the non-reducing end of alpha-1,4-glucan. This Pongo abelii (Sumatran orangutan) protein is Glycogen [starch] synthase, muscle (GYS1).